A 352-amino-acid chain; its full sequence is N-terminal EF-hand calcium-binding protein 1 (352 aa).

Serine 4 carries the post-translational modification Phosphoserine. EF-hand domains follow at residues 26 to 61 (KGMSIFLDILRRADKNDDGKLSFEEFKAYFADGVLS) and 60 to 95 (LSGEELHELFHTIDTHNTNNLDTEELCEYFSQHLGE). Residues aspartate 39, asparagine 41, aspartate 43, lysine 45, and glutamate 50 each contribute to the Ca(2+) site. A coiled-coil region spans residues 135 to 163 (LLKETLNQLQSLQNSLECAMETTEEQTRQ). The segment at 155 to 202 (ETTEEQTRQERQGPSKPEVLSIQWPGKRSSRRVQRHNSFSPNSPQFNV) is disordered. The span at 190-202 (HNSFSPNSPQFNV) shows a compositional bias: polar residues. Phosphoserine occurs at positions 192 and 197. Residues 209–275 (EEDNQWMTQI…EEFQLALKHY (67 aa)) are a coiled coil. Residues 252-340 (MLVQRQMSVT…LETPELTSTM (89 aa)) form the ABM domain.

Interacts with STX1. May interact with CPNE6. As to expression, expressed in brain (at protein level). Expressed in the cerebral cortex only in layer 4, thalamic nuclei (the mediodorsal nucleus), hippocampus (a small band of pyramidal neurons at the boundary between CA1 and CA3), interneurons interspersed throughout the hippocampus proper, interneurons in the hilus, bodies of the neurons but also their dendritic projections (at protein level).

The protein resides in the cytoplasm. The polypeptide is N-terminal EF-hand calcium-binding protein 1 (Necab1) (Mus musculus (Mouse)).